The chain runs to 401 residues: Phosphoglycerate kinase (401 aa).

Substrate is bound by residues 26–28 (DFN), Arg-41, 64–67 (HLGK), Arg-125, and Arg-158. Residues Lys-209, Gly-300, Glu-331, and 357–360 (GGDS) contribute to the ATP site.

This sequence belongs to the phosphoglycerate kinase family. As to quaternary structure, monomer.

The protein localises to the cytoplasm. The enzyme catalyses (2R)-3-phosphoglycerate + ATP = (2R)-3-phospho-glyceroyl phosphate + ADP. Its pathway is carbohydrate degradation; glycolysis; pyruvate from D-glyceraldehyde 3-phosphate: step 2/5. The protein is Phosphoglycerate kinase of Clostridium tetani (strain Massachusetts / E88).